A 35-amino-acid polypeptide reads, in one-letter code: uncharacterized protein (35 aa).

Residues 10 to 30 (LMITASFFAIFIIIVVSVLLL) form a helical membrane-spanning segment.

It is found in the membrane. This is an uncharacterized protein from Salmonella typhimurium (strain LT2 / SGSC1412 / ATCC 700720).